The chain runs to 431 residues: O-methyltransferase gliM (431 aa).

Residues E20–V85 are a coiled coil. S-adenosyl-L-methionine contacts are provided by residues D287 and G319–F321. H338 acts as the Proton acceptor in catalysis.

This sequence belongs to the class I-like SAM-binding methyltransferase superfamily. Cation-independent O-methyltransferase family. COMT subfamily.

The protein operates within mycotoxin biosynthesis. In terms of biological role, O-methyltransferase; part of the gene cluster that mediates the biosynthesis of gliotoxin, a member of the epipolythiodioxopiperazine (ETP) class of toxins characterized by a disulfide bridged cyclic dipeptide. The first step in gliotoxin biosynthesis is the condensation of serine and phenylalanine to form the cyclo-L-phenylalanyl-L-serine diketopiperazine (DKP) by the NRPS gliP. GliP is also able to produce the DKP cyclo-L-tryptophanyl-L-serine, suggesting that the substrate specificity of the first adenylation (A) domain in gliP is sufficiently relaxed to accommodate both L-Phe and L-Trp. The cytochrome P450 monooxygenase gliC has been shown to catalyze the subsequent hydroxylation of the alpha-carbon of L-Phe in cyclo-L-phenylalanyl-L-serine whereas the second cytochrome P450 enzyme, gliF, is presumably involved in the modification of the DKP side chain. The glutathione S-transferase (GST) gliG then forms a bis-glutathionylated biosynthetic intermediate which is responsible for the sulfurization of gliotoxin. This bis-glutathionylated intermediate is subsequently processed by the gamma-glutamyl cyclotransferase gliK to remove both gamma-glutamyl moieties. Subsequent processing via gliI yields a biosynthetic intermediate, which is N-methylated via the N-methyltransferase gliN, before the gliotoxin oxidoreductase gliT-mediated disulfide bridge closure. GliN-mediated amide methylation confers stability to ETP, damping the spontaneous formation of tri- and tetrasulfides. Intracellular dithiol gliotoxin oxidized by gliT is subsequently effluxed by gliA. Gliotoxin contributes to pathogenesis during invasive aspergillosis. In macrophages and neutrophils, gliotoxin showed inhibition of various different cell functions including cytokine production, antigen presentation, phagocytosis, and production of reactive oxygen species. This is O-methyltransferase gliM from Aspergillus fumigatus (strain ATCC MYA-4609 / CBS 101355 / FGSC A1100 / Af293) (Neosartorya fumigata).